A 135-amino-acid polypeptide reads, in one-letter code: Probable histone H2A.1 (135 aa).

It belongs to the histone H2A family. In terms of assembly, the nucleosome is a histone octamer containing two molecules each of H2A, H2B, H3 and H4 assembled in one H3-H4 heterotetramer and two H2A-H2B heterodimers. The octamer wraps approximately 147 bp of DNA.

It is found in the nucleus. Its subcellular location is the chromosome. Functionally, core component of nucleosome. Nucleosomes wrap and compact DNA into chromatin, limiting DNA accessibility to the cellular machineries which require DNA as a template. Histones thereby play a central role in transcription regulation, DNA repair, DNA replication and chromosomal stability. DNA accessibility is regulated via a complex set of post-translational modifications of histones, also called histone code, and nucleosome remodeling. The chain is Probable histone H2A.1 from Oryza sativa subsp. japonica (Rice).